Consider the following 280-residue polypeptide: Elongation factor Ts (280 aa).

Residues 79-82 (TDFV) form an involved in Mg(2+) ion dislocation from EF-Tu region.

It belongs to the EF-Ts family.

It is found in the cytoplasm. In terms of biological role, associates with the EF-Tu.GDP complex and induces the exchange of GDP to GTP. It remains bound to the aminoacyl-tRNA.EF-Tu.GTP complex up to the GTP hydrolysis stage on the ribosome. This Vibrio cholerae serotype O1 (strain ATCC 39541 / Classical Ogawa 395 / O395) protein is Elongation factor Ts.